Reading from the N-terminus, the 102-residue chain is Large ribosomal subunit protein eL21 (102 aa).

Residues 1–21 (MVRRSKGFRSRTRKKLRKKPR) are compositionally biased toward basic residues. The tract at residues 1–33 (MVRRSKGFRSRTRKKLRKKPRERGLSPLGPMTQ) is disordered.

This sequence belongs to the eukaryotic ribosomal protein eL21 family.

The protein is Large ribosomal subunit protein eL21 of Methanopyrus kandleri (strain AV19 / DSM 6324 / JCM 9639 / NBRC 100938).